Consider the following 508-residue polypeptide: Histidine ammonia-lyase (508 aa).

Positions 143–145 (ASG) form a cross-link, 5-imidazolinone (Ala-Gly). S144 carries the 2,3-didehydroalanine (Ser) modification.

It belongs to the PAL/histidase family. Post-translationally, contains an active site 4-methylidene-imidazol-5-one (MIO), which is formed autocatalytically by cyclization and dehydration of residues Ala-Ser-Gly.

The protein resides in the cytoplasm. The enzyme catalyses L-histidine = trans-urocanate + NH4(+). Its pathway is amino-acid degradation; L-histidine degradation into L-glutamate; N-formimidoyl-L-glutamate from L-histidine: step 1/3. The protein is Histidine ammonia-lyase of Anaeromyxobacter sp. (strain K).